Here is a 369-residue protein sequence, read N- to C-terminus: Ferrochelatase (369 aa).

Residues histidine 210 and glutamate 291 each coordinate Fe cation.

The protein belongs to the ferrochelatase family.

The protein localises to the cytoplasm. It catalyses the reaction heme b + 2 H(+) = protoporphyrin IX + Fe(2+). Its pathway is porphyrin-containing compound metabolism; protoheme biosynthesis; protoheme from protoporphyrin-IX: step 1/1. Functionally, catalyzes the ferrous insertion into protoporphyrin IX. The sequence is that of Ferrochelatase from Thioalkalivibrio sulfidiphilus (strain HL-EbGR7).